Here is a 423-residue protein sequence, read N- to C-terminus: Imidazolonepropionase (423 aa).

Fe(3+) contacts are provided by histidine 78 and histidine 80. Zn(2+) contacts are provided by histidine 78 and histidine 80. The 4-imidazolone-5-propanoate site is built by arginine 87, tyrosine 150, and histidine 183. Tyrosine 150 serves as a coordination point for N-formimidoyl-L-glutamate. A Fe(3+)-binding site is contributed by histidine 247. Histidine 247 is a Zn(2+) binding site. Position 250 (glutamate 250) interacts with 4-imidazolone-5-propanoate. Residue aspartate 322 participates in Fe(3+) binding. A Zn(2+)-binding site is contributed by aspartate 322. Residues asparagine 324 and glycine 326 each coordinate N-formimidoyl-L-glutamate. Serine 327 contributes to the 4-imidazolone-5-propanoate binding site.

Belongs to the metallo-dependent hydrolases superfamily. HutI family. The cofactor is Zn(2+). Fe(3+) serves as cofactor.

It localises to the cytoplasm. It catalyses the reaction 4-imidazolone-5-propanoate + H2O = N-formimidoyl-L-glutamate. The protein operates within amino-acid degradation; L-histidine degradation into L-glutamate; N-formimidoyl-L-glutamate from L-histidine: step 3/3. In terms of biological role, catalyzes the hydrolytic cleavage of the carbon-nitrogen bond in imidazolone-5-propanoate to yield N-formimidoyl-L-glutamate. It is the third step in the universal histidine degradation pathway. The chain is Imidazolonepropionase from Bacillus cereus (strain ATCC 10987 / NRS 248).